Consider the following 308-residue polypeptide: MESAKSAAALVEPCQTNSARRLTEDDSLRVSVLSEALPYIQRFSGRRIVIKYGGAAMAHANLQEAVFRDLALLVSVGVEPVVVHGGGPEINQWLERLEIPAQFRDGLRVTDADTMDVVEMVLVGRVNKQIVNGLNQLGAKAVGLSGSDGNLVEARPWGDGSHGFVGDVARVNTDVLEPILAKGYVPVISSVAATVEGCSHNINADTVAGEIAAALEAEKLILLTDTPGILLDRDDPSSLVHQLRLSEARQLITEGVVAGGMTPKTECCIRALAQGVGAAHIIDGRVPHALLLEVFTDAGIGTMVVGRS.

Residues 86-87, Arg108, and Asn201 each bind substrate; that span reads GG.

This sequence belongs to the acetylglutamate kinase family. ArgB subfamily.

The protein localises to the cytoplasm. It carries out the reaction N-acetyl-L-glutamate + ATP = N-acetyl-L-glutamyl 5-phosphate + ADP. The protein operates within amino-acid biosynthesis; L-arginine biosynthesis; N(2)-acetyl-L-ornithine from L-glutamate: step 2/4. Its function is as follows. Catalyzes the ATP-dependent phosphorylation of N-acetyl-L-glutamate. This chain is Acetylglutamate kinase, found in Prochlorococcus marinus (strain MIT 9313).